The sequence spans 301 residues: ATP synthase gamma chain (301 aa).

This sequence belongs to the ATPase gamma chain family. F-type ATPases have 2 components, CF(1) - the catalytic core - and CF(0) - the membrane proton channel. CF(1) has five subunits: alpha(3), beta(3), gamma(1), delta(1), epsilon(1). CF(0) has three main subunits: a, b and c.

The protein localises to the cell inner membrane. Its function is as follows. Produces ATP from ADP in the presence of a proton gradient across the membrane. The gamma chain is believed to be important in regulating ATPase activity and the flow of protons through the CF(0) complex. The protein is ATP synthase gamma chain of Helicobacter pylori (strain P12).